The following is a 142-amino-acid chain: Cytochrome c-type biogenesis protein CcmE (142 aa).

At 1 to 2 the chain is on the cytoplasmic side; it reads MK. A helical; Signal-anchor for type II membrane protein membrane pass occupies residues 3–23; it reads GKYLLGILVILGALGYMVFGG. Over 24-142 the chain is Periplasmic; it reads LGRNLVYFLT…EVRKLIEEAQ (119 aa). Residues His118 and Tyr122 each coordinate heme.

It belongs to the CcmE/CycJ family.

The protein resides in the cell inner membrane. In terms of biological role, heme chaperone required for the biogenesis of c-type cytochromes. Transiently binds heme delivered by CcmC and transfers the heme to apo-cytochromes in a process facilitated by CcmF and CcmH. The protein is Cytochrome c-type biogenesis protein CcmE of Thermus thermophilus (strain ATCC BAA-163 / DSM 7039 / HB27).